The sequence spans 301 residues: Protoheme IX farnesyltransferase (301 aa).

9 helical membrane passes run 20–42 (FTELVKIGIVNSNTITAFTGMWL), 55–75 (VDVIFFTIVGSALIVAASGAF), 105–125 (ALMVALVLGVVGTIMLFMTTW), 126–146 (QAGVLGVIGVFLYVVVYSLYA), 150–172 (LVSNTVIGSFSGAVPPLIGWFAV), 176–198 (FSIVPIMLFLVMFCWQPPHFYAI), 227–247 (MFFWVILLTVLPFFMFDLGLV), 249–269 (VILATLLNIGWLALSIYGFKM), and 280–300 (FVYSLNYMTILFVAMVVISIF).

It belongs to the UbiA prenyltransferase family. Protoheme IX farnesyltransferase subfamily. In terms of assembly, interacts with CtaA.

The protein localises to the cell membrane. It carries out the reaction heme b + (2E,6E)-farnesyl diphosphate + H2O = Fe(II)-heme o + diphosphate. It participates in porphyrin-containing compound metabolism; heme O biosynthesis; heme O from protoheme: step 1/1. Functionally, converts heme B (protoheme IX) to heme O by substitution of the vinyl group on carbon 2 of heme B porphyrin ring with a hydroxyethyl farnesyl side group. The polypeptide is Protoheme IX farnesyltransferase (Listeria innocua serovar 6a (strain ATCC BAA-680 / CLIP 11262)).